The primary structure comprises 413 residues: Aminopeptidase 2 (413 aa).

Positions 250, 316, 340, 345, 378, and 380 each coordinate a divalent metal cation.

This sequence belongs to the peptidase M29 family. In terms of assembly, homodimer. Requires Co(2+) as cofactor. Zn(2+) is required as a cofactor. It depends on Mg(2+) as a cofactor.

Functionally, broad specificity metal-dependent exopeptidase, releasing all N-terminal amino acids. The sequence is that of Aminopeptidase 2 from Geobacillus stearothermophilus (Bacillus stearothermophilus).